The sequence spans 239 residues: ATP-dependent dethiobiotin synthetase BioD (239 aa).

Glutamate 15–phenylalanine 20 provides a ligand contact to ATP. A Mg(2+)-binding site is contributed by threonine 19. Lysine 40 is a catalytic residue. Residues aspartate 57, glutamate 118–glycine 121, and asparagine 178–histidine 179 contribute to the ATP site. Mg(2+) is bound by residues aspartate 57 and glutamate 118.

It belongs to the dethiobiotin synthetase family. Homodimer. Mg(2+) serves as cofactor.

The protein resides in the cytoplasm. It carries out the reaction (7R,8S)-7,8-diammoniononanoate + CO2 + ATP = (4R,5S)-dethiobiotin + ADP + phosphate + 3 H(+). The protein operates within cofactor biosynthesis; biotin biosynthesis; biotin from 7,8-diaminononanoate: step 1/2. Catalyzes a mechanistically unusual reaction, the ATP-dependent insertion of CO2 between the N7 and N8 nitrogen atoms of 7,8-diaminopelargonic acid (DAPA, also called 7,8-diammoniononanoate) to form a ureido ring. The protein is ATP-dependent dethiobiotin synthetase BioD of Burkholderia lata (strain ATCC 17760 / DSM 23089 / LMG 22485 / NCIMB 9086 / R18194 / 383).